We begin with the raw amino-acid sequence, 441 residues long: Heat shock factor protein 4 (441 aa).

Residues 17 to 121 (NVPAFLTKLW…EHLLEHIKRK (105 aa)) mediate DNA binding. The tract at residues 130 to 205 (TKVRQEDLSK…QMQSNSPSTV (76 aa)) is hydrophobic repeat HR-A/B.

The protein belongs to the HSF family. As to expression, predominantly expressed in the eye.

The protein resides in the nucleus. In terms of biological role, heat-shock transcription factor that specifically binds heat shock promoter elements (HSE). Required for denucleation and organelle rupture and degradation that occur during eye lens terminal differentiation, when fiber cells that compose the lens degrade all membrane-bound organelles in order to provide lens with transparency to allow the passage of light. In this process, may regulate denucleation of lens fiber cells in part by activating dnase1l1l and dnase2b transcription. May be involved in DNA repair through the transcriptional regulation of rad51. May up-regulate TP53 protein in lens fiber cells, possibly through protein stabilization. In the eye lens, controls the expression of alpha-crystallin B chain/CRYAB and consequently may be involved in the regulation of lysosomal acidification. The sequence is that of Heat shock factor protein 4 from Danio rerio (Zebrafish).